Reading from the N-terminus, the 385-residue chain is Succinate--CoA ligase [ADP-forming] subunit beta (385 aa).

The 232-residue stretch at 9–240 (KEIFAKYGIP…ETQLPQLEVE (232 aa)) folds into the ATP-grasp domain. ATP-binding positions include K46, 53–55 (GRG), E98, T101, and E106. Residues N195 and D209 each contribute to the Mg(2+) site. Substrate contacts are provided by residues N260 and 317–319 (GIL).

It belongs to the succinate/malate CoA ligase beta subunit family. Heterotetramer of two alpha and two beta subunits. Mg(2+) is required as a cofactor.

The catalysed reaction is succinate + ATP + CoA = succinyl-CoA + ADP + phosphate. It carries out the reaction GTP + succinate + CoA = succinyl-CoA + GDP + phosphate. Its pathway is carbohydrate metabolism; tricarboxylic acid cycle; succinate from succinyl-CoA (ligase route): step 1/1. In terms of biological role, succinyl-CoA synthetase functions in the citric acid cycle (TCA), coupling the hydrolysis of succinyl-CoA to the synthesis of either ATP or GTP and thus represents the only step of substrate-level phosphorylation in the TCA. The beta subunit provides nucleotide specificity of the enzyme and binds the substrate succinate, while the binding sites for coenzyme A and phosphate are found in the alpha subunit. The polypeptide is Succinate--CoA ligase [ADP-forming] subunit beta (Aquifex aeolicus (strain VF5)).